Reading from the N-terminus, the 136-residue chain is Large ribosomal subunit protein uL16 (136 aa).

This sequence belongs to the universal ribosomal protein uL16 family. Part of the 50S ribosomal subunit.

Functionally, binds 23S rRNA and is also seen to make contacts with the A and possibly P site tRNAs. This is Large ribosomal subunit protein uL16 from Haemophilus influenzae (strain 86-028NP).